Here is a 243-residue protein sequence, read N- to C-terminus: Biosynthetic peptidoglycan transglycosylase (243 aa).

A helical membrane pass occupies residues Leu21 to Asp43.

The protein belongs to the glycosyltransferase 51 family.

It localises to the cell inner membrane. The enzyme catalyses [GlcNAc-(1-&gt;4)-Mur2Ac(oyl-L-Ala-gamma-D-Glu-L-Lys-D-Ala-D-Ala)](n)-di-trans,octa-cis-undecaprenyl diphosphate + beta-D-GlcNAc-(1-&gt;4)-Mur2Ac(oyl-L-Ala-gamma-D-Glu-L-Lys-D-Ala-D-Ala)-di-trans,octa-cis-undecaprenyl diphosphate = [GlcNAc-(1-&gt;4)-Mur2Ac(oyl-L-Ala-gamma-D-Glu-L-Lys-D-Ala-D-Ala)](n+1)-di-trans,octa-cis-undecaprenyl diphosphate + di-trans,octa-cis-undecaprenyl diphosphate + H(+). Its pathway is cell wall biogenesis; peptidoglycan biosynthesis. Functionally, peptidoglycan polymerase that catalyzes glycan chain elongation from lipid-linked precursors. This is Biosynthetic peptidoglycan transglycosylase from Xylella fastidiosa (strain M12).